An 838-amino-acid polypeptide reads, in one-letter code: Leucine--tRNA ligase (838 aa).

Positions 36 to 46 match the 'HIGH' region motif; the sequence is PYPSGKIHMGH. The 'KMSKS' region motif lies at 611 to 615; sequence KMSKS. Position 614 (Lys614) interacts with ATP.

The protein belongs to the class-I aminoacyl-tRNA synthetase family.

The protein localises to the cytoplasm. The catalysed reaction is tRNA(Leu) + L-leucine + ATP = L-leucyl-tRNA(Leu) + AMP + diphosphate. The polypeptide is Leucine--tRNA ligase (Wolbachia sp. subsp. Drosophila simulans (strain wRi)).